We begin with the raw amino-acid sequence, 549 residues long: MLHQKLNPTSSEDLTIDVDLLYETDPCELKLDEMIEAEPEPEMIEGLPASDALTPADRYLELFEHVQSTKLFPDSKTFPDCAPKMDPLDILIRYRKVRRHRDFDLRRFVENHFWLPETLSSEYVSNPENSLKEHIDQLWPILTREPQDHIPWSSLLALPQSYIVPGGRFSETYYWDSYFTMLGLAESGREDLLKCMADNFAWMIENYGHIPNGNRTYYLSRSQPPVFALMVELFEEDGVRGARRYLDHLKMEYAFWMDGAESLALNQAYRHVVRMPDGSLLNRYWDDRDTPRDESWLEDVETAKHSGRPPNEVYRDLRAGAASGWDYSSRWLRDAGRLASIRTTQFIPIDLNAFLYKLESAIANISALKGERDTEALFRQKASDRRAAVNHYLWDDENGCYRDYDWRREEMALFSAASIVPLYVGMANHEQADRLANVVRSRLLTPGGIMATEYETGEQWDKPNGWAPLQWMAIQGFKLYGDDMLGDEIAHNWLKTVNHFYQEHHKLIEKYHISGGTPREGGGGEYPLQDGFGWTNGVVRRLIGLYGEP.

Substrate is bound by residues Arg168, 175 to 176 (WD), Asn212, 221 to 223 (RSQ), 292 to 294 (RDE), and Gly324. Catalysis depends on proton donor/acceptor residues Asp326 and Glu509. A substrate-binding site is contributed by Glu525.

This sequence belongs to the glycosyl hydrolase 37 family. In terms of assembly, monomer.

It is found in the cytoplasm. It catalyses the reaction alpha,alpha-trehalose + H2O = alpha-D-glucose + beta-D-glucose. It participates in glycan degradation; trehalose degradation; D-glucose from alpha,alpha-trehalose: step 1/1. Functionally, hydrolyzes trehalose to glucose. Could be involved, in cells returning to low osmolarity conditions, in the utilization of the accumulated cytoplasmic trehalose, which was synthesized in response to high osmolarity. In Salmonella arizonae (strain ATCC BAA-731 / CDC346-86 / RSK2980), this protein is Cytoplasmic trehalase.